The sequence spans 311 residues: Ornithine carbamoyltransferase (311 aa).

Carbamoyl phosphate is bound by residues 56 to 59 (STRT), glutamine 83, arginine 107, and 134 to 137 (HPTQ). L-ornithine contacts are provided by residues asparagine 166, aspartate 230, and 234 to 235 (SM). Carbamoyl phosphate is bound by residues 270–271 (CL) and lysine 298.

The protein belongs to the aspartate/ornithine carbamoyltransferase superfamily. OTCase family.

It is found in the cytoplasm. It carries out the reaction carbamoyl phosphate + L-ornithine = L-citrulline + phosphate + H(+). It functions in the pathway amino-acid degradation; L-arginine degradation via ADI pathway; carbamoyl phosphate from L-arginine: step 2/2. Functionally, reversibly catalyzes the transfer of the carbamoyl group from carbamoyl phosphate (CP) to the N(epsilon) atom of ornithine (ORN) to produce L-citrulline. The chain is Ornithine carbamoyltransferase from Ignicoccus hospitalis (strain KIN4/I / DSM 18386 / JCM 14125).